Consider the following 332-residue polypeptide: Glycerol-3-phosphate dehydrogenase [NAD(P)+] (332 aa).

Residues serine 11, phenylalanine 12, lysine 32, and lysine 106 each contribute to the NADPH site. Residues lysine 106, glycine 137, and serine 139 each coordinate sn-glycerol 3-phosphate. Alanine 141 provides a ligand contact to NADPH. Positions 192, 245, 255, 256, and 257 each coordinate sn-glycerol 3-phosphate. Lysine 192 acts as the Proton acceptor in catalysis. Residue arginine 256 participates in NADPH binding. NADPH contacts are provided by valine 280 and glutamate 282.

This sequence belongs to the NAD-dependent glycerol-3-phosphate dehydrogenase family.

The protein localises to the cytoplasm. The enzyme catalyses sn-glycerol 3-phosphate + NAD(+) = dihydroxyacetone phosphate + NADH + H(+). It catalyses the reaction sn-glycerol 3-phosphate + NADP(+) = dihydroxyacetone phosphate + NADPH + H(+). The protein operates within membrane lipid metabolism; glycerophospholipid metabolism. Functionally, catalyzes the reduction of the glycolytic intermediate dihydroxyacetone phosphate (DHAP) to sn-glycerol 3-phosphate (G3P), the key precursor for phospholipid synthesis. This Staphylococcus aureus (strain Mu3 / ATCC 700698) protein is Glycerol-3-phosphate dehydrogenase [NAD(P)+].